A 195-amino-acid chain; its full sequence is uncharacterized protein (195 aa).

A run of 4 helical transmembrane segments spans residues 89–106 (SWISVLLIVTIIALPLLP), 111–128 (HLPLAVYLMVLAGYVWKR), 149–168 (VKISRVGAVYLLFLAVVLLL), and 172–194 (LNALVVLLLIAVSCAAFFLFLNI).

The protein localises to the cell membrane. This is an uncharacterized protein from Bacillus subtilis (strain 168).